We begin with the raw amino-acid sequence, 309 residues long: MEFKHISVLLEETIDSLNIKEDGVYVDCTLGGGGHSKEILKKLSHKGKLIGIDQDTSAIKAAKERLKDYENVIYVHNNFYNIDSILEELDIDKVDGIIMDLGVSSYQLDEASRGFSYMKDAPLDMRMNREENLSAYGVINNYEEEELFKILKNYGEEKFSRKIARFIVEKRTENPIETTGELVEIIRKAIPAKFQREGHPAKRTFQAIRIEVNKELQILNKAIEDSVNRLNKDGRLSIITFHSLEDRIVKVKFKELEKPCTCPPSFPICVCGKEPQIKIITKKPIEPSKEEKEINSRSRSAKLRVCRKI.

S-adenosyl-L-methionine is bound by residues 33–35, D53, F79, D100, and Q107; that span reads GGH.

This sequence belongs to the methyltransferase superfamily. RsmH family.

The protein localises to the cytoplasm. The enzyme catalyses cytidine(1402) in 16S rRNA + S-adenosyl-L-methionine = N(4)-methylcytidine(1402) in 16S rRNA + S-adenosyl-L-homocysteine + H(+). Functionally, specifically methylates the N4 position of cytidine in position 1402 (C1402) of 16S rRNA. The sequence is that of Ribosomal RNA small subunit methyltransferase H from Clostridium botulinum (strain ATCC 19397 / Type A).